A 436-amino-acid polypeptide reads, in one-letter code: 3-ketoacyl-CoA thiolase (436 aa).

The active-site Acyl-thioester intermediate is Cys-99. Catalysis depends on proton acceptor residues His-392 and Cys-422.

It belongs to the thiolase-like superfamily. Thiolase family. As to quaternary structure, heterotetramer of two alpha chains (FadJ) and two beta chains (FadI).

It localises to the cytoplasm. It catalyses the reaction an acyl-CoA + acetyl-CoA = a 3-oxoacyl-CoA + CoA. The protein operates within lipid metabolism; fatty acid beta-oxidation. Its function is as follows. Catalyzes the final step of fatty acid oxidation in which acetyl-CoA is released and the CoA ester of a fatty acid two carbons shorter is formed. This is 3-ketoacyl-CoA thiolase from Yersinia pestis bv. Antiqua (strain Angola).